Here is a 183-residue protein sequence, read N- to C-terminus: DELTA-miturgitoxin-Cp1a (183 aa).

An N-terminal signal peptide occupies residues 1–20; that stretch reads MKFSLFFSVFFLAVLHACLS. The propeptide occupies 21–47; the sequence is ESEIDLEDEEHFMSSDSFLSEIQDESR. The short motif at 44 to 47 is the Processing quadruplet motif element; the sequence is DESR. Intrachain disulfides connect cysteine 51/cysteine 66, cysteine 58/cysteine 75, cysteine 65/cysteine 88, cysteine 77/cysteine 86, cysteine 115/cysteine 130, cysteine 122/cysteine 139, cysteine 129/cysteine 157, and cysteine 141/cysteine 155. 2 Domain repeats span residues 51–77 and 115–141; these read CIER…KCTC and CVPK…QCKC. Residues 51–141 form a 2 X approximate repeats with cysteine pattern C-C-CC-C-C region; the sequence is CIERNKECTN…GGIFKYQCKC (91 aa). The predicted alpha-helix stretch occupies residues 164-177; it reads QAIEGALRIAKKLI. Tryptophan 181 is modified (tryptophan amide).

It belongs to the neurotoxin 19 (CSTX) family. Double-CSTX subfamily. Cleavage of the propeptide depends on the processing quadruplet motif (XXXR, with at least one of X being E). As to expression, expressed by the venom gland.

The protein localises to the secreted. It localises to the target cell membrane. Spider venom toxin that exhibits cytolytic activity by forming an alpha-helix across the membrane. Lethal to insect larvae. Causes instant paralysis and death in the larvae of the flesh fly (S.carnaria) at doses of 20 ug/g, at doses of less than 10 ug/g causes reversible paralysis. Has cytolytic activity against insect Sf9 cells. Causes stable and irreversible depolarization of fly muscle fibers, leading to contracture at higher toxin concentrations. Destabilizes membranes. The chain is DELTA-miturgitoxin-Cp1a from Cheiracanthium punctorium (Yellow sac spider).